The sequence spans 337 residues: Lipoyl synthase (337 aa).

Residues cysteine 81, cysteine 86, cysteine 92, cysteine 107, cysteine 111, cysteine 114, and serine 323 each coordinate [4Fe-4S] cluster. In terms of domain architecture, Radical SAM core spans 93–312 (FSHGTATFMI…EDYGNALGFS (220 aa)).

Belongs to the radical SAM superfamily. Lipoyl synthase family. [4Fe-4S] cluster serves as cofactor.

It is found in the cytoplasm. It catalyses the reaction [[Fe-S] cluster scaffold protein carrying a second [4Fe-4S](2+) cluster] + N(6)-octanoyl-L-lysyl-[protein] + 2 oxidized [2Fe-2S]-[ferredoxin] + 2 S-adenosyl-L-methionine + 4 H(+) = [[Fe-S] cluster scaffold protein] + N(6)-[(R)-dihydrolipoyl]-L-lysyl-[protein] + 4 Fe(3+) + 2 hydrogen sulfide + 2 5'-deoxyadenosine + 2 L-methionine + 2 reduced [2Fe-2S]-[ferredoxin]. Its pathway is protein modification; protein lipoylation via endogenous pathway; protein N(6)-(lipoyl)lysine from octanoyl-[acyl-carrier-protein]: step 2/2. In terms of biological role, catalyzes the radical-mediated insertion of two sulfur atoms into the C-6 and C-8 positions of the octanoyl moiety bound to the lipoyl domains of lipoate-dependent enzymes, thereby converting the octanoylated domains into lipoylated derivatives. The chain is Lipoyl synthase from Xanthomonas axonopodis pv. citri (strain 306).